The primary structure comprises 237 residues: MDNGDWGHRLTHPVTLNVGGHLYTTSISTLQRYPDSMLGAMFRGDFPTTRDAQGNYFIDRDGTLFRYILNFLRTSELTLPVDFTELDLLRKEADFYQIEPLIQCLNDPKPLYPLDTFEQVVELSSTRKLSKYSNPVAVIITQLTITTKVHSLLEGISNNFTKWNKHMMDTRDCQVSFTFGPCDYHQEVSLRVHLMDYITKQGFTIRNTRVHHMSERANENTVEHHWTFCRLAYKVED.

Positions 12–81 constitute a BTB domain; that stretch reads HPVTLNVGGH…LRTSELTLPV (70 aa).

Homopentamer. May be part of a cullin-containing E3 ubiquitin-protein ligase complex.

It functions in the pathway protein modification; protein ubiquitination. Its function is as follows. Probable substrate-specific adapter of a cullin-containing E3 ubiquitin-protein ligase complex mediating the ubiquitination and subsequent proteasomal degradation of target proteins. The protein is BTB/POZ domain-containing protein KCTD6 (kctd6) of Danio rerio (Zebrafish).